The chain runs to 368 residues: DNA replication and repair protein RecF (368 aa).

ATP is bound at residue 30-37; that stretch reads GNNAQGKT.

It belongs to the RecF family.

It is found in the cytoplasm. The RecF protein is involved in DNA metabolism; it is required for DNA replication and normal SOS inducibility. RecF binds preferentially to single-stranded, linear DNA. It also seems to bind ATP. The protein is DNA replication and repair protein RecF of Streptococcus pyogenes serotype M5 (strain Manfredo).